Consider the following 46-residue polypeptide: Large ribosomal subunit protein bL36 (46 aa).

Belongs to the bacterial ribosomal protein bL36 family.

The sequence is that of Large ribosomal subunit protein bL36 from Photorhabdus laumondii subsp. laumondii (strain DSM 15139 / CIP 105565 / TT01) (Photorhabdus luminescens subsp. laumondii).